Consider the following 141-residue polypeptide: Hemoglobin subunit alpha (141 aa).

The region spanning 1–141 (VLSPADKTNV…VSTVLTSKYR (141 aa)) is the Globin domain. Phosphoserine is present on S3. K7 bears the N6-succinyllysine mark. Phosphothreonine is present on T8. K11 is modified (N6-succinyllysine). At K16 the chain carries N6-acetyllysine; alternate. An N6-succinyllysine; alternate modification is found at K16. A Phosphotyrosine modification is found at Y24. Position 35 is a phosphoserine (S35). K40 carries the post-translational modification N6-succinyllysine. S49 is subject to Phosphoserine. Residue H58 participates in O2 binding. Residue H87 coordinates heme b. S102 bears the Phosphoserine mark. T108 is modified (phosphothreonine). A Phosphoserine modification is found at S124. A phosphothreonine mark is found at T134 and T137. At S138 the chain carries Phosphoserine.

The protein belongs to the globin family. In terms of assembly, heterotetramer of two alpha chains and two beta chains. In terms of tissue distribution, red blood cells.

Functionally, involved in oxygen transport from the lung to the various peripheral tissues. Its function is as follows. Hemopressin acts as an antagonist peptide of the cannabinoid receptor CNR1. Hemopressin-binding efficiently blocks cannabinoid receptor CNR1 and subsequent signaling. This is Hemoglobin subunit alpha (HBA) from Odobenus rosmarus divergens (Pacific walrus).